We begin with the raw amino-acid sequence, 297 residues long: F-box only protein 2 (297 aa).

Positions 1-42 (MDGDGDPESVGQPEEASPEEQQEEACAEEANGGEERPEDDGE) are disordered. Over residues 16–27 (ASPEEQQEEACA) the composition is skewed to acidic residues. The F-box domain maps to 45-92 (AAYLDELPEPLLLRVLAELPAAQLVQACRLVCLRWKELVDGAPLWLLK). The 184-residue stretch at 114–297 (FYFLSKRRRN…VTNSSVWVEP (184 aa)) folds into the FBA domain. Residues 211-213 (RRD) and 279-280 (YW) contribute to the a carbohydrate site.

Component of the SCF(FBXO2) complex consisting of CUL1, RBX1, SKP1 and FBXO2. Predominantly detected as heterodimer with SKP1; the heterodimer with SKP1 is not part of the SCF(FBXO2) complex.

The protein localises to the cytoplasm. It is found in the microsome membrane. The protein operates within protein modification; protein ubiquitination. Functionally, substrate recognition component of a SCF (SKP1-CUL1-F-box protein) E3 ubiquitin-protein ligase complex that mediates the ubiquitination and subsequent proteasomal degradation of target proteins. Involved in the endoplasmic reticulum-associated degradation pathway (ERAD) for misfolded lumenal proteins by recognizing and binding sugar chains on unfolded glycoproteins that are retrotranslocated into the cytosol and promoting their ubiquitination and subsequent degradation. Prevents formation of cytosolic aggregates of unfolded glycoproteins that have been retrotranslocated into the cytosol. Able to recognize and bind denatured glycoproteins, preferentially those of the high-mannose type. This chain is F-box only protein 2 (FBXO2), found in Bos taurus (Bovine).